Here is a 218-residue protein sequence, read N- to C-terminus: ATP phosphoribosyltransferase (218 aa).

The protein belongs to the ATP phosphoribosyltransferase family. Short subfamily. Heteromultimer composed of HisG and HisZ subunits.

It localises to the cytoplasm. It carries out the reaction 1-(5-phospho-beta-D-ribosyl)-ATP + diphosphate = 5-phospho-alpha-D-ribose 1-diphosphate + ATP. Its pathway is amino-acid biosynthesis; L-histidine biosynthesis; L-histidine from 5-phospho-alpha-D-ribose 1-diphosphate: step 1/9. In terms of biological role, catalyzes the condensation of ATP and 5-phosphoribose 1-diphosphate to form N'-(5'-phosphoribosyl)-ATP (PR-ATP). Has a crucial role in the pathway because the rate of histidine biosynthesis seems to be controlled primarily by regulation of HisG enzymatic activity. The protein is ATP phosphoribosyltransferase of Acaryochloris marina (strain MBIC 11017).